The primary structure comprises 197 residues: MASIQNLYETVVGVLGDQASKVISALGEITVECLPEHYISVMTALRDHEELHFELLVDLCGVDYSTYKNEVWQGKRFAVVSQLLSVKNNQRIRVRVWVSDDDFPVVESVVPVYNSADWYEREAFDLYGIMFNNHPDLRRILTDYGFVGHPFRKDFPISGYVEMRYDEEQKRVIYQPVTIEPREITPRIVREENYGGQ.

The protein belongs to the complex I 30 kDa subunit family. In terms of assembly, NDH-1 is composed of 14 different subunits. Subunits NuoB, C, D, E, F, and G constitute the peripheral sector of the complex.

It localises to the cell inner membrane. The catalysed reaction is a quinone + NADH + 5 H(+)(in) = a quinol + NAD(+) + 4 H(+)(out). Its function is as follows. NDH-1 shuttles electrons from NADH, via FMN and iron-sulfur (Fe-S) centers, to quinones in the respiratory chain. The immediate electron acceptor for the enzyme in this species is believed to be ubiquinone. Couples the redox reaction to proton translocation (for every two electrons transferred, four hydrogen ions are translocated across the cytoplasmic membrane), and thus conserves the redox energy in a proton gradient. The sequence is that of NADH-quinone oxidoreductase subunit C from Neisseria meningitidis serogroup C (strain 053442).